The chain runs to 364 residues: Peptide chain release factor 2 (364 aa).

The residue at position 251 (glutamine 251) is an N5-methylglutamine.

The protein belongs to the prokaryotic/mitochondrial release factor family. In terms of processing, methylated by PrmC. Methylation increases the termination efficiency of RF2.

The protein localises to the cytoplasm. Functionally, peptide chain release factor 2 directs the termination of translation in response to the peptide chain termination codons UGA and UAA. The chain is Peptide chain release factor 2 from Campylobacter hominis (strain ATCC BAA-381 / DSM 21671 / CCUG 45161 / LMG 19568 / NCTC 13146 / CH001A).